The primary structure comprises 459 residues: ATP synthase subunit beta (459 aa).

148–155 (GGAGVGKT) contributes to the ATP binding site.

Belongs to the ATPase alpha/beta chains family. F-type ATPases have 2 components, CF(1) - the catalytic core - and CF(0) - the membrane proton channel. CF(1) has five subunits: alpha(3), beta(3), gamma(1), delta(1), epsilon(1). CF(0) has three main subunits: a(1), b(2) and c(9-12). The alpha and beta chains form an alternating ring which encloses part of the gamma chain. CF(1) is attached to CF(0) by a central stalk formed by the gamma and epsilon chains, while a peripheral stalk is formed by the delta and b chains.

Its subcellular location is the cell inner membrane. The catalysed reaction is ATP + H2O + 4 H(+)(in) = ADP + phosphate + 5 H(+)(out). Produces ATP from ADP in the presence of a proton gradient across the membrane. The catalytic sites are hosted primarily by the beta subunits. The chain is ATP synthase subunit beta from Thiobacillus denitrificans (strain ATCC 25259 / T1).